The chain runs to 158 residues: Pycsar effector protein SaPycTM (158 aa).

Transmembrane regions (helical) follow at residues 20–40, 53–73, and 136–156; these read FADAKALAIISINGFILNFNF, IFNFTAFILLIITIILAAFAV, and VFIISALGYSCLLFSSIFQII.

It is found in the cell membrane. Functionally, pycsar (pyrimidine cyclase system for antiphage resistance) provides immunity against bacteriophage. The pyrimidine cyclase (PycC) synthesizes cyclic nucleotides in response to infection; these serve as specific second messenger signals. The signals activate the adjacent effector, leading to bacterial cell death and abortive phage infection. A clade E Pycsar system. Its function is as follows. The effector gene of a two-gene Pycsar system. Expression of this and adjacent SaPycC cytidylate cyclase (AC P0DV38) probably confers resistance to bacteriophage. The genes are probably only expressed in response to bacteriophage infection. Probably only responds to cCMP (produced by its cognate NTP cyclase), acts by impairing membrane integrity. The polypeptide is Pycsar effector protein SaPycTM (Staphylococcus aureus).